A 179-amino-acid polypeptide reads, in one-letter code: UPF0227 protein Sbal195_2522 (179 aa).

This sequence belongs to the UPF0227 family.

This chain is UPF0227 protein Sbal195_2522, found in Shewanella baltica (strain OS195).